The sequence spans 575 residues: Golgi-associated kinase 1A (575 aa).

An N-terminal signal peptide occupies residues methionine 1–alanine 29. A propeptide spans valine 30–arginine 119 (removed in mature form). The O-glycosylated at one site stretch occupies residues threonine 53–threonine 58. The segment covering valine 143–histidine 153 has biased composition (basic and acidic residues). Positions valine 143–glutamate 162 are disordered. Residues arginine 437–proline 575 constitute a propeptide, removed in mature form. Asparagine 566 is a glycosylation site (N-linked (GlcNAc...) asparagine).

This sequence belongs to the GASK family. Post-translationally, O-glycosylated with core 1 or possibly core 8 glycans. In terms of processing, proteolytically cleaved. Cleaved at Arg-120 and Arg-437 leading to a processed mature product of 35 kDa. The cleavage takes place in the Golgi apparatus. In terms of tissue distribution, expressed in skin, lung and colon (at protein level).

It is found in the secreted. It localises to the endoplasmic reticulum. The protein resides in the golgi apparatus. The protein localises to the membrane. Its subcellular location is the caveola. The chain is Golgi-associated kinase 1A from Homo sapiens (Human).